The sequence spans 763 residues: Ethylene receptor 2 (763 aa).

3 consecutive transmembrane segments (helical) span residues 58–78 (FLIA…ATCS), 86–106 (IVLQ…ITMF), and 115–135 (VVLA…ATAI). Residues Cys-97 and His-101 each coordinate Cu cation. The GAF domain maps to 190 to 339 (DRHTILYTTM…VVADQVAVAL (150 aa)). In terms of domain architecture, Histidine kinase spans 382-615 (AMYDGMRRPM…TIMLALQFQL (234 aa)). A Response regulatory domain is found at 641–760 (QVILVDSDDT…ALGDELYRVL (120 aa)). 4-aspartylphosphate is present on Asp-692.

Belongs to the ethylene receptor family. Cu cation is required as a cofactor. In terms of processing, autophosphorylated on serine, threonine and tyrosine residues.

It is found in the endoplasmic reticulum membrane. The catalysed reaction is ATP + protein L-histidine = ADP + protein N-phospho-L-histidine.. Ethylene receptor related to bacterial two-component regulators. Acts as a negative regulator of ethylene signaling. May delay the transition from the vegetative stage to the floral stage by up-regulating GI (GIGANTEA) and RCN1 and cause starch accumulation in stems by down-regulating the alpha-amylase AMY3D. In Oryza sativa subsp. japonica (Rice), this protein is Ethylene receptor 2.